A 122-amino-acid chain; its full sequence is Thioredoxin H-type (122 aa).

The Thioredoxin domain occupies 2–118; it reads AAEEGVVIAC…IVKHVGATAA (117 aa). An intrachain disulfide couples C40 to C43.

Its subcellular location is the cytoplasm. Participates in various redox reactions through the reversible oxidation of the active center dithiol to a disulfide. The H form is known to activate a number of cytosolic enzymes. In Oryza sativa subsp. indica (Rice), this protein is Thioredoxin H-type (TRXH).